The primary structure comprises 196 residues: Peptidyl-tRNA hydrolase (196 aa).

Y18 serves as a coordination point for tRNA. H23 serves as the catalytic Proton acceptor. Residues F69, N71, and N117 each contribute to the tRNA site.

It belongs to the PTH family. Monomer.

The protein localises to the cytoplasm. It carries out the reaction an N-acyl-L-alpha-aminoacyl-tRNA + H2O = an N-acyl-L-amino acid + a tRNA + H(+). Functionally, hydrolyzes ribosome-free peptidyl-tRNAs (with 1 or more amino acids incorporated), which drop off the ribosome during protein synthesis, or as a result of ribosome stalling. Its function is as follows. Catalyzes the release of premature peptidyl moieties from peptidyl-tRNA molecules trapped in stalled 50S ribosomal subunits, and thus maintains levels of free tRNAs and 50S ribosomes. This Aliivibrio salmonicida (strain LFI1238) (Vibrio salmonicida (strain LFI1238)) protein is Peptidyl-tRNA hydrolase.